The chain runs to 310 residues: Lipoyl synthase (310 aa).

Positions 54, 59, 65, 80, 84, 87, and 295 each coordinate [4Fe-4S] cluster. Positions 66–284 (FASGTATFLI…LFGEDNLGFM (219 aa)) constitute a Radical SAM core domain.

Belongs to the radical SAM superfamily. Lipoyl synthase family. It depends on [4Fe-4S] cluster as a cofactor.

Its subcellular location is the cytoplasm. The enzyme catalyses [[Fe-S] cluster scaffold protein carrying a second [4Fe-4S](2+) cluster] + N(6)-octanoyl-L-lysyl-[protein] + 2 oxidized [2Fe-2S]-[ferredoxin] + 2 S-adenosyl-L-methionine + 4 H(+) = [[Fe-S] cluster scaffold protein] + N(6)-[(R)-dihydrolipoyl]-L-lysyl-[protein] + 4 Fe(3+) + 2 hydrogen sulfide + 2 5'-deoxyadenosine + 2 L-methionine + 2 reduced [2Fe-2S]-[ferredoxin]. The protein operates within protein modification; protein lipoylation via endogenous pathway; protein N(6)-(lipoyl)lysine from octanoyl-[acyl-carrier-protein]: step 2/2. Its function is as follows. Catalyzes the radical-mediated insertion of two sulfur atoms into the C-6 and C-8 positions of the octanoyl moiety bound to the lipoyl domains of lipoate-dependent enzymes, thereby converting the octanoylated domains into lipoylated derivatives. The protein is Lipoyl synthase of Prochlorococcus marinus (strain MIT 9215).